Here is a 222-residue protein sequence, read N- to C-terminus: 25 kDa elongation factor 1-beta (222 aa).

Over residues 75 to 94 the composition is skewed to low complexity; sequence TSASAPAKQAPKKAASAPAK. The interval 75 to 98 is disordered; the sequence is TSASAPAKQAPKKAASAPAKQADE.

The protein belongs to the EF-1-beta/EF-1-delta family. In terms of assembly, EF-1 is composed of 4 subunits: alpha, beta, delta, and gamma.

In terms of biological role, EF-1-beta and EF-1-delta stimulate the exchange of GDP bound to EF-1-alpha to GTP. This chain is 25 kDa elongation factor 1-beta, found in Trypanosoma cruzi.